The primary structure comprises 145 residues: 6-pyruvoyl tetrahydrobiopterin synthase (145 aa).

At Ser-19 the chain carries Phosphoserine. Position 24 (His-24) interacts with Zn(2+). Phosphoserine is present on Ser-28. The active-site Proton acceptor is Cys-43. Residues His-49 and His-51 each coordinate Zn(2+). His-90 serves as the catalytic Charge relay system. Tyr-128 carries the phosphotyrosine modification. Residue Glu-134 is the Charge relay system of the active site.

The protein belongs to the PTPS family. Homohexamer formed of two homotrimers in a head to head fashion. Zn(2+) is required as a cofactor. In terms of processing, phosphorylation of Ser-19 is required for maximal enzyme activity.

It catalyses the reaction 7,8-dihydroneopterin 3'-triphosphate = 6-pyruvoyl-5,6,7,8-tetrahydropterin + triphosphate + H(+). Its pathway is cofactor biosynthesis; tetrahydrobiopterin biosynthesis; tetrahydrobiopterin from 7,8-dihydroneopterin triphosphate: step 1/3. Involved in the biosynthesis of tetrahydrobiopterin, an essential cofactor of aromatic amino acid hydroxylases. Catalyzes the transformation of 7,8-dihydroneopterin triphosphate into 6-pyruvoyl tetrahydropterin. This chain is 6-pyruvoyl tetrahydrobiopterin synthase (PTS), found in Pongo abelii (Sumatran orangutan).